Reading from the N-terminus, the 250-residue chain is MENTIVIKLGGVASDNLTEGFFRQITEWQAANKKIVLVHGGGHYITKMMEALAIPVETKNGLRITNKAALEVTKMVLIGQVQPAITTAFQKRNISVIGLNAGDTGLLEADRLSDTDLGLVGKITKVKTNLIEQLLSENIITVIAPLGINSEHDWLNVNADTAACEVASALHAEALYLLTDVPGVKNGSEIINEIATAEIEKLQKTGVIKGGMIPKLASAAFAAENGVDQVIITNSLETIGTKIKSKVAIG.

Substrate-binding positions include 41–42, R63, and N156; that span reads GG.

This sequence belongs to the acetylglutamate kinase family. ArgB subfamily.

The protein localises to the cytoplasm. It carries out the reaction N-acetyl-L-glutamate + ATP = N-acetyl-L-glutamyl 5-phosphate + ADP. Its pathway is amino-acid biosynthesis; L-arginine biosynthesis; N(2)-acetyl-L-ornithine from L-glutamate: step 2/4. In terms of biological role, catalyzes the ATP-dependent phosphorylation of N-acetyl-L-glutamate. The protein is Acetylglutamate kinase of Listeria monocytogenes serotype 4a (strain HCC23).